The following is a 439-amino-acid chain: ATP-dependent protease ATPase subunit HslU (439 aa).

Residues Ile-17, 59–64 (GVGKTE), Asp-251, Glu-317, and Arg-389 each bind ATP.

It belongs to the ClpX chaperone family. HslU subfamily. A double ring-shaped homohexamer of HslV is capped on each side by a ring-shaped HslU homohexamer. The assembly of the HslU/HslV complex is dependent on binding of ATP.

The protein resides in the cytoplasm. Its function is as follows. ATPase subunit of a proteasome-like degradation complex; this subunit has chaperone activity. The binding of ATP and its subsequent hydrolysis by HslU are essential for unfolding of protein substrates subsequently hydrolyzed by HslV. HslU recognizes the N-terminal part of its protein substrates and unfolds these before they are guided to HslV for hydrolysis. The sequence is that of ATP-dependent protease ATPase subunit HslU from Campylobacter jejuni (strain RM1221).